We begin with the raw amino-acid sequence, 360 residues long: Phospho-N-acetylmuramoyl-pentapeptide-transferase (360 aa).

A run of 10 helical transmembrane segments spans residues 25–45, 73–93, 97–117, 132–152, 168–188, 199–219, 236–256, 263–283, 288–308, and 338–358; these read RGILGVLTALSLALCLGPWMI, TMGGALILSAIGISTLLWADL, YVWVVLLVTLAFGAIGWVDDY, WKYFWQSVFGLGAAIFLYMTA, VSIPLGIGFVVLTYFVIVGSS, GLAIMPTVMVGGALGIFCYLS, AGELIVFCGALIGAGLGFLWF, VFMGDVGALALGAALGTIAVI, IVLFIMGGVFVMETLSVVIQV, and VIVRFWIITVILVLIGLATLK.

Belongs to the glycosyltransferase 4 family. MraY subfamily. Requires Mg(2+) as cofactor.

It is found in the cell inner membrane. It catalyses the reaction UDP-N-acetyl-alpha-D-muramoyl-L-alanyl-gamma-D-glutamyl-meso-2,6-diaminopimeloyl-D-alanyl-D-alanine + di-trans,octa-cis-undecaprenyl phosphate = di-trans,octa-cis-undecaprenyl diphospho-N-acetyl-alpha-D-muramoyl-L-alanyl-D-glutamyl-meso-2,6-diaminopimeloyl-D-alanyl-D-alanine + UMP. The protein operates within cell wall biogenesis; peptidoglycan biosynthesis. Functionally, catalyzes the initial step of the lipid cycle reactions in the biosynthesis of the cell wall peptidoglycan: transfers peptidoglycan precursor phospho-MurNAc-pentapeptide from UDP-MurNAc-pentapeptide onto the lipid carrier undecaprenyl phosphate, yielding undecaprenyl-pyrophosphoryl-MurNAc-pentapeptide, known as lipid I. The chain is Phospho-N-acetylmuramoyl-pentapeptide-transferase from Pseudomonas fluorescens (strain ATCC BAA-477 / NRRL B-23932 / Pf-5).